A 253-amino-acid chain; its full sequence is FAS1 domain-containing protein CAGL0M08734g (253 aa).

A signal peptide spans 1 to 16 (MVALKYVLVPVALVAA). Residues 84–248 (DIYLDSQISV…GVILVIDATL (165 aa)) form the FAS1 domain.

It localises to the vacuole. The protein is FAS1 domain-containing protein CAGL0M08734g of Candida glabrata (strain ATCC 2001 / BCRC 20586 / JCM 3761 / NBRC 0622 / NRRL Y-65 / CBS 138) (Yeast).